The chain runs to 60 residues: MHYIDWVILLTFAAALIVCLTPKPEPCIITVSGASATVSNCPNPELLTDLVKALKPAKPV.

At 1–6 (MHYIDW) the chain is on the lumenal side. Residues 7-23 (VILLTFAAALIVCLTPK) form a helical membrane-spanning segment. Topologically, residues 24–60 (PEPCIITVSGASATVSNCPNPELLTDLVKALKPAKPV) are cytoplasmic.

Belongs to the Tymovirales TGBp3 protein family.

It is found in the host endoplasmic reticulum membrane. In terms of biological role, plays a role in viral cell-to-cell propagation, by facilitating genome transport to neighboring plant cells through plasmosdesmata. May induce the formation of granular vesicles derived from the Endoplasmic reticulum, which align on actin filaments. This Citrus (ICRSV) protein is Movement protein TGBp3.